Here is a 276-residue protein sequence, read N- to C-terminus: Large ribosomal subunit protein uL2 (276 aa).

Positions alanine 224 to glycine 276 are disordered. The span at lysine 254–lysine 270 shows a compositional bias: basic residues.

Belongs to the universal ribosomal protein uL2 family. In terms of assembly, part of the 50S ribosomal subunit. Forms a bridge to the 30S subunit in the 70S ribosome.

One of the primary rRNA binding proteins. Required for association of the 30S and 50S subunits to form the 70S ribosome, for tRNA binding and peptide bond formation. It has been suggested to have peptidyltransferase activity; this is somewhat controversial. Makes several contacts with the 16S rRNA in the 70S ribosome. The protein is Large ribosomal subunit protein uL2 of Ehrlichia canis (strain Jake).